The sequence spans 38 residues: Large ribosomal subunit protein bL36 (38 aa).

This sequence belongs to the bacterial ribosomal protein bL36 family.

This is Large ribosomal subunit protein bL36 from Stutzerimonas stutzeri (strain A1501) (Pseudomonas stutzeri).